Here is a 417-residue protein sequence, read N- to C-terminus: NADH-quinone oxidoreductase subunit D (417 aa).

It belongs to the complex I 49 kDa subunit family. NDH-1 is composed of 14 different subunits. Subunits NuoB, C, D, E, F, and G constitute the peripheral sector of the complex.

It is found in the cell inner membrane. The catalysed reaction is a quinone + NADH + 5 H(+)(in) = a quinol + NAD(+) + 4 H(+)(out). NDH-1 shuttles electrons from NADH, via FMN and iron-sulfur (Fe-S) centers, to quinones in the respiratory chain. The immediate electron acceptor for the enzyme in this species is believed to be ubiquinone. Couples the redox reaction to proton translocation (for every two electrons transferred, four hydrogen ions are translocated across the cytoplasmic membrane), and thus conserves the redox energy in a proton gradient. This is NADH-quinone oxidoreductase subunit D from Paraburkholderia phytofirmans (strain DSM 17436 / LMG 22146 / PsJN) (Burkholderia phytofirmans).